The primary structure comprises 407 residues: Putative glucose/galactose transporter (407 aa).

12 helical membrane-spanning segments follow: residues 11–31 (GSLT…DILI), 47–67 (LIQF…GNVI), 70–90 (IGYP…CALF), 96–116 (FGSY…IVCL), 139–159 (VQAF…LLIF), 180–200 (VQMP…VMYL), 225–245 (FVFG…IGSF), 263–283 (HYLV…SALM), 300–320 (IILI…ALTF), 321–341 (VGFF…LNLG), 349–369 (GVIS…GVVT), and 378–398 (NLLY…FFAL).

Belongs to the major facilitator superfamily. FHS transporter (TC 2.A.1.7) family.

It localises to the cell inner membrane. Its function is as follows. Intake of glucose and galactose. This chain is Putative glucose/galactose transporter (gluP), found in Helicobacter pylori (strain J99 / ATCC 700824) (Campylobacter pylori J99).